The primary structure comprises 307 residues: tRNA dimethylallyltransferase (307 aa).

9–16 (GPTAVGKT) is a binding site for ATP. 11–16 (TAVGKT) is a substrate binding site. An interaction with substrate tRNA region spans residues 34-37 (DSMQ).

Belongs to the IPP transferase family. Monomer. Requires Mg(2+) as cofactor.

The catalysed reaction is adenosine(37) in tRNA + dimethylallyl diphosphate = N(6)-dimethylallyladenosine(37) in tRNA + diphosphate. In terms of biological role, catalyzes the transfer of a dimethylallyl group onto the adenine at position 37 in tRNAs that read codons beginning with uridine, leading to the formation of N6-(dimethylallyl)adenosine (i(6)A). The chain is tRNA dimethylallyltransferase from Limosilactobacillus reuteri (strain DSM 20016) (Lactobacillus reuteri).